The chain runs to 334 residues: RNA polymerase sigma factor RpoS (334 aa).

The interval 21–50 (PGIMLDESSADEQPSPRATPKATTSFSSKQ) is disordered. Residues 61–94 (DATQLYLNEIGFSPLLTPEEEVHFARLAQKGDPA) form a sigma-70 factor domain-1 region. A sigma-70 factor domain-2 region spans residues 99–169 (MIESNLRLVV…ERAIMNQTRT (71 aa)). The short motif at 123–126 (DLIE) is the Interaction with polymerase core subunit RpoC element. Positions 179–254 (ELNVYLRAAR…DDRPTDPCEL (76 aa)) are sigma-70 factor domain-3. The tract at residues 267 to 320 (WLTELTDKQREVVIRRFGLRGHESSTLEEVGQEIGLTRERVRQIQVEALKRLRE) is sigma-70 factor domain-4. Positions 293-312 (LEEVGQEIGLTRERVRQIQV) form a DNA-binding region, H-T-H motif.

The protein belongs to the sigma-70 factor family. RpoS subfamily. As to quaternary structure, interacts with the RNA polymerase core enzyme.

The protein resides in the cytoplasm. Sigma factors are initiation factors that promote the attachment of RNA polymerase to specific initiation sites and are then released. This sigma factor is the master transcriptional regulator of the stationary phase and the general stress response. This Pseudomonas aeruginosa (strain ATCC 15692 / DSM 22644 / CIP 104116 / JCM 14847 / LMG 12228 / 1C / PRS 101 / PAO1) protein is RNA polymerase sigma factor RpoS.